Reading from the N-terminus, the 260-residue chain is Interleukin-1 receptor-associated kinase 1-binding protein 1 (260 aa).

Residues 30–50 (GRETLPGLRHPLSSTQAQTAT) are disordered. Residues 41–50 (LSSTQAQTAT) show a composition bias toward polar residues. A phosphoserine mark is found at Ser56, Ser62, and Ser235. Thr237 bears the Phosphothreonine mark. Residues 240 to 260 (AASKVFITFEVKGKEKRKKHL) form a required for nuclear localization (NLS) region. Ser242 carries the post-translational modification Phosphoserine. Thr247 bears the Phosphothreonine mark.

This sequence belongs to the IRAK1BP1 family. As to quaternary structure, interacts with IRAK1 and RELA. Interacts with HSPA8 and HSPA1. Phosphorylation at Ser-56 and/or Ser-62 is required for full activity. Phosphorylated on at least one of Ser-235, Thr-237, Ser-242 and Thr-247 upon TNF-alpha activation, which favors nuclear translocation.

The protein localises to the cytoplasm. It is found in the nucleus. Its function is as follows. Component of the IRAK1-dependent TNFRSF1A signaling pathway that leads to NF-kappa-B activation and is required for cell survival. Acts by enhancing RELA transcriptional activity. This Homo sapiens (Human) protein is Interleukin-1 receptor-associated kinase 1-binding protein 1 (IRAK1BP1).